A 167-amino-acid polypeptide reads, in one-letter code: Small ribosomal subunit protein mS25 (167 aa).

This sequence belongs to the mitochondrion-specific ribosomal protein mS25 family. In terms of assembly, component of the mitochondrial ribosome small subunit (28S) which comprises a 12S rRNA and about 30 distinct proteins.

It localises to the mitochondrion. This chain is Small ribosomal subunit protein mS25 (mRpS25), found in Drosophila melanogaster (Fruit fly).